The primary structure comprises 481 residues: uncharacterized protein (481 aa).

The helical transmembrane segment at 18–38 (FMIVTAIAVAIFVVITGVVIF) threads the bilayer.

It localises to the cell inner membrane. Functionally, involved in DNA conjugation in the recipient strain. This is an uncharacterized protein from Mycolicibacterium smegmatis (strain MKD8) (Mycobacterium smegmatis).